The chain runs to 273 residues: Undecaprenyl-diphosphatase (273 aa).

Helical transmembrane passes span 3–23, 47–67, 90–110, 120–140, 148–168, 186–206, 217–237, and 249–269; these read IILWLQAVILGLVQGMTEFLP, ALDAMQFGSVIAVLGYFWQDI, LLLGITVGTIPALAAGLLLKL, IIATMAIAMAILLGLAEQWGS, IGILDGFLVGCGQMIALLPGA, PTAARFSFLLGIPTLTIATLV, LLIPLVIATLSSMVFSYLAIA, and WVFIWYRIGLGSALWGAIALG.

The protein belongs to the UppP family.

The protein resides in the cell inner membrane. It catalyses the reaction di-trans,octa-cis-undecaprenyl diphosphate + H2O = di-trans,octa-cis-undecaprenyl phosphate + phosphate + H(+). In terms of biological role, catalyzes the dephosphorylation of undecaprenyl diphosphate (UPP). Confers resistance to bacitracin. This is Undecaprenyl-diphosphatase from Thermosynechococcus vestitus (strain NIES-2133 / IAM M-273 / BP-1).